Here is a 263-residue protein sequence, read N- to C-terminus: 4-hydroxy-tetrahydrodipicolinate reductase (263 aa).

Residues 7–12 (GFKGRM), 96–98 (GTT), and 122–125 (APNF) each bind NAD(+). The active-site Proton donor/acceptor is H152. H153 is a binding site for (S)-2,3,4,5-tetrahydrodipicolinate. The Proton donor role is filled by K156. Position 162-163 (162-163 (GT)) interacts with (S)-2,3,4,5-tetrahydrodipicolinate.

It belongs to the DapB family.

The protein resides in the cytoplasm. It catalyses the reaction (S)-2,3,4,5-tetrahydrodipicolinate + NAD(+) + H2O = (2S,4S)-4-hydroxy-2,3,4,5-tetrahydrodipicolinate + NADH + H(+). The enzyme catalyses (S)-2,3,4,5-tetrahydrodipicolinate + NADP(+) + H2O = (2S,4S)-4-hydroxy-2,3,4,5-tetrahydrodipicolinate + NADPH + H(+). The protein operates within amino-acid biosynthesis; L-lysine biosynthesis via DAP pathway; (S)-tetrahydrodipicolinate from L-aspartate: step 4/4. Catalyzes the conversion of 4-hydroxy-tetrahydrodipicolinate (HTPA) to tetrahydrodipicolinate. This is 4-hydroxy-tetrahydrodipicolinate reductase from Listeria innocua serovar 6a (strain ATCC BAA-680 / CLIP 11262).